Here is a 185-residue protein sequence, read N- to C-terminus: Prenylated Rab acceptor protein 1 (185 aa).

Over 1–78 (MAAQKDQQKD…RNVEYYQSNY (78 aa)) the chain is Cytoplasmic. A required for interaction with prenylated RAB3A and VAMP2 region spans residues 30–54 (AGREWLERRRATIRPWSTFVDQQRF). The next 2 helical transmembrane spans lie at 79–94 (VFVF…VTSP) and 95–112 (MLLV…ILYL). At 113–131 (RTLESKLVLFGREVSPAHQ) the chain is on the cytoplasmic side. A run of 2 helical transmembrane segments spans residues 132–148 (YALA…LAGA) and 149–165 (GSAV…VIGS). A required for interaction with GDI1 region spans residues 165–185 (SHAAFHQIEAVDGEELQMEPV). The Cytoplasmic segment spans residues 166–185 (HAAFHQIEAVDGEELQMEPV). Residues 175-185 (VDGEELQMEPV) are required for interaction with prenylated RAB3A and VAMP2. Residues 175–185 (VDGEELQMEPV) are homodimerization.

This sequence belongs to the PRA1 family. Homodimer. Interacts with VAMP2 (synaptobrevin-2), GDI1, and PCLO. Interacts specifically with prenylated Rab proteins; strongly with RAB4B, RAB5A and RAB5C, and weakly with RAB4A, RAB6, RAB7A, RAB17 and RAB22. Interacts with NDRG1. In terms of tissue distribution, ubiquitous. Strongest expression found in placenta, pituitary gland, kidney, lung and stomach.

It is found in the cell membrane. The protein resides in the cytoplasm. It localises to the golgi apparatus. The protein localises to the cytoplasmic vesicle. Its subcellular location is the secretory vesicle. It is found in the synaptic vesicle. Its function is as follows. General Rab protein regulator required for vesicle formation from the Golgi complex. May control vesicle docking and fusion by mediating the action of Rab GTPases to the SNARE complexes. In addition it inhibits the removal of Rab GTPases from the membrane by GDI. This Homo sapiens (Human) protein is Prenylated Rab acceptor protein 1 (RABAC1).